Reading from the N-terminus, the 297-residue chain is 33 kDa chaperonin (297 aa).

Cystine bridges form between Cys239/Cys241 and Cys272/Cys275.

This sequence belongs to the HSP33 family. Under oxidizing conditions two disulfide bonds are formed involving the reactive cysteines. Under reducing conditions zinc is bound to the reactive cysteines and the protein is inactive.

Its subcellular location is the cytoplasm. Its function is as follows. Redox regulated molecular chaperone. Protects both thermally unfolding and oxidatively damaged proteins from irreversible aggregation. Plays an important role in the bacterial defense system toward oxidative stress. The protein is 33 kDa chaperonin of Synechococcus elongatus (strain ATCC 33912 / PCC 7942 / FACHB-805) (Anacystis nidulans R2).